The chain runs to 300 residues: uncharacterized protein (300 aa).

A divalent metal cation contacts are provided by glutamate 146, glutamate 148, and aspartate 177.

This sequence belongs to the FAH family.

This is an uncharacterized protein from Staphylococcus aureus (strain MW2).